Here is a 365-residue protein sequence, read N- to C-terminus: Mitogen-activated protein kinase HOG1 (365 aa).

Residues 20–299 (YVDLQPVGMG…AAEGLAHEYL (280 aa)) enclose the Protein kinase domain. ATP is bound by residues 26–34 (VGMGAFGLV) and Lys-49. Asp-141 functions as the Proton acceptor in the catalytic mechanism. At Thr-171 the chain carries Phosphothreonine. The short motif at 171–173 (TGY) is the TXY element. Position 173 is a phosphotyrosine (Tyr-173).

The protein belongs to the protein kinase superfamily. Ser/Thr protein kinase family. MAP kinase subfamily. HOG1 sub-subfamily. The cofactor is Mg(2+). Dually phosphorylated on Thr-171 and Tyr-173, which activates the enzyme. Phosphorylated by PBS2 after osmotic stress.

Its subcellular location is the cytoplasm. The protein localises to the nucleus. It carries out the reaction L-seryl-[protein] + ATP = O-phospho-L-seryl-[protein] + ADP + H(+). It catalyses the reaction L-threonyl-[protein] + ATP = O-phospho-L-threonyl-[protein] + ADP + H(+). With respect to regulation, activated by tyrosine and threonine phosphorylation. Functionally, proline-directed serine/threonine-protein kinase involved in a signal transduction pathway that is activated by changes in the osmolarity of the extracellular environment. Controls osmotic regulation of transcription of target genes. Also involved in the response to UV radiation and mediates the sensitivity to fludioxonil, an agricultural fungicide. The sequence is that of Mitogen-activated protein kinase HOG1 (HOG1) from Cryptococcus neoformans var. neoformans serotype D (strain B-3501A) (Filobasidiella neoformans).